Reading from the N-terminus, the 76-residue chain is Large ribosomal subunit protein bL31 (76 aa).

Belongs to the bacterial ribosomal protein bL31 family. Type A subfamily. As to quaternary structure, part of the 50S ribosomal subunit.

In terms of biological role, binds the 23S rRNA. This is Large ribosomal subunit protein bL31 from Rhizorhabdus wittichii (strain DSM 6014 / CCUG 31198 / JCM 15750 / NBRC 105917 / EY 4224 / RW1) (Sphingomonas wittichii).